We begin with the raw amino-acid sequence, 250 residues long: 5'-nucleotidase SurE (250 aa).

A divalent metal cation is bound by residues Asp8, Asp9, Ser40, and Asn94.

The protein belongs to the SurE nucleotidase family. It depends on a divalent metal cation as a cofactor.

Its subcellular location is the cytoplasm. It carries out the reaction a ribonucleoside 5'-phosphate + H2O = a ribonucleoside + phosphate. Its function is as follows. Nucleotidase that shows phosphatase activity on nucleoside 5'-monophosphates. The chain is 5'-nucleotidase SurE from Wolbachia sp. subsp. Drosophila simulans (strain wRi).